The chain runs to 211 residues: Thioredoxin domain-containing protein 9 homolog (211 aa).

Positions 68 to 178 (YSEIHSEKDF…LEERIARAQV (111 aa)) constitute a Thioredoxin domain. Residues 184-203 (ESSSLKPKSTTQVRRNVRQS) are compositionally biased toward polar residues. A disordered region spans residues 184 to 211 (ESSSLKPKSTTQVRRNVRQSARSDSDSE).

This Arabidopsis thaliana (Mouse-ear cress) protein is Thioredoxin domain-containing protein 9 homolog.